A 226-amino-acid chain; its full sequence is MTARPLAELVDPGWADALGPVADQVTKMGEFLREENSSGRGYLPSGANVLRAFTYPLADVRVLIVGQDPYPTPGHAMGLSFSVAADVRPVPRSLGNIFDEYQSDLGLPKPANGDLTPWSEQGVMLLNRVLTVRPGNPASHRGKGWEIVTECAIRALVARDAPLVAILWGRDAATLKPMLGPSVPTIESVHPSPLSASRGFFGSKPFSRANELLVGLGAQPVDWRLP.

Asp68 serves as the catalytic Proton acceptor.

It belongs to the uracil-DNA glycosylase (UDG) superfamily. UNG family.

It is found in the cytoplasm. It catalyses the reaction Hydrolyzes single-stranded DNA or mismatched double-stranded DNA and polynucleotides, releasing free uracil.. Functionally, excises uracil residues from the DNA which can arise as a result of misincorporation of dUMP residues by DNA polymerase or due to deamination of cytosine. This chain is Uracil-DNA glycosylase, found in Mycobacteroides abscessus (strain ATCC 19977 / DSM 44196 / CCUG 20993 / CIP 104536 / JCM 13569 / NCTC 13031 / TMC 1543 / L948) (Mycobacterium abscessus).